Here is a 350-residue protein sequence, read N- to C-terminus: UDP-N-acetylenolpyruvoylglucosamine reductase (350 aa).

Residues 24–195 enclose the FAD-binding PCMH-type domain; it reads HVEATARWLL…VAVEFNLPLL (172 aa). Arginine 172 is an active-site residue. The active-site Proton donor is the serine 245. Glutamate 342 is a catalytic residue.

It belongs to the MurB family. Requires FAD as cofactor.

It is found in the cytoplasm. The catalysed reaction is UDP-N-acetyl-alpha-D-muramate + NADP(+) = UDP-N-acetyl-3-O-(1-carboxyvinyl)-alpha-D-glucosamine + NADPH + H(+). It participates in cell wall biogenesis; peptidoglycan biosynthesis. Cell wall formation. This is UDP-N-acetylenolpyruvoylglucosamine reductase from Xanthomonas oryzae pv. oryzae (strain PXO99A).